Consider the following 95-residue polypeptide: Acylphosphatase (95 aa).

One can recognise an Acylphosphatase-like domain in the interval 7-94 (AALVRITGRV…EAPAGFRITR (88 aa)). Catalysis depends on residues R22 and N40. Over residues 76–88 (VASEEASSAEAPA) the composition is skewed to low complexity. The tract at residues 76 to 95 (VASEEASSAEAPAGFRITRG) is disordered.

The protein belongs to the acylphosphatase family.

It catalyses the reaction an acyl phosphate + H2O = a carboxylate + phosphate + H(+). This chain is Acylphosphatase (acyP), found in Rhizobium meliloti (strain 1021) (Ensifer meliloti).